The primary structure comprises 246 residues: 23S rRNA (guanosine-2'-O-)-methyltransferase RlmB (246 aa).

Residues Gly198, Ile218, and Leu227 each coordinate S-adenosyl-L-methionine.

The protein belongs to the class IV-like SAM-binding methyltransferase superfamily. RNA methyltransferase TrmH family. RlmB subfamily.

The protein resides in the cytoplasm. The enzyme catalyses guanosine(2251) in 23S rRNA + S-adenosyl-L-methionine = 2'-O-methylguanosine(2251) in 23S rRNA + S-adenosyl-L-homocysteine + H(+). Functionally, specifically methylates the ribose of guanosine 2251 in 23S rRNA. This Shewanella oneidensis (strain ATCC 700550 / JCM 31522 / CIP 106686 / LMG 19005 / NCIMB 14063 / MR-1) protein is 23S rRNA (guanosine-2'-O-)-methyltransferase RlmB.